The sequence spans 205 residues: Metal-independent carbonic anhydrase (205 aa).

Positions Met1 to Val24 are cleaved as a signal peptide. Residues Thr106 and Tyr124 each coordinate hydrogencarbonate.

This sequence belongs to the iota-class carbonic anhydrase family. In terms of assembly, homotetramer; dimer of dimers. Does not require a metal cofactor. serves as cofactor.

The catalysed reaction is hydrogencarbonate + H(+) = CO2 + H2O. With respect to regulation, activity is not affected by EDTA or 2,6-pyridinedicarboxylic acid (PDA). Activity is not affected by addition of most divalent metal ions, except zinc ions which decrease the activity. Inhibited by the iodide ion. In terms of biological role, catalyzes the hydration of carbon dioxide (CO2) to bicarbonate (HCO3(-)). Has only very low bicarbonate dehydration activity. May function even in metal-poor environments. In Nostoc sp. (strain PCC 7120 / SAG 25.82 / UTEX 2576), this protein is Metal-independent carbonic anhydrase.